A 381-amino-acid polypeptide reads, in one-letter code: MRVVQVANFYGPRSGGLRTAVDRLGAEYCASGHEVFLIVPGARTERHLLRTGVVRITLPAKHIPYTGGYRAVMPGAVRTVLETLRPDALEVSDRLTLRSLGRWGREHGVTTVMISHERLDRFAGQLLPRRAAQKFADFANARTAANYDTVVCTTGFAREEFDRIGATNTVTVPLGVDLKTFHPRRRCARVRQHWATPTQILLVHCGRLSVEKHADRSIDALAALCDAGVDARLVIAGEGPLRARLERKATGLPIDFTGFISDRHAVAGLLASADVALAPGPHETFGLAALESLACGTPAVVSRTSALTEIITADSGACADNRPEAIAHAVRTIVSRPERHRRRCARRRAEIFTWQRAAASMLATLGAMAVSTRCGDTQDTA.

Residues glycine 16, arginine 207, 211 to 212 (EK), 283 to 287 (ETFGL), and glutamate 291 contribute to the substrate site.

Belongs to the glycosyltransferase group 1 family. Glycosyltransferase 4 subfamily.

It participates in phospholipid metabolism; phosphatidylinositol metabolism. Functionally, catalyzes the addition of a mannose residue from GDP-D-mannose to the position 6 of the alpha-1,6-linked mannose residue of the triacyl phosphatidylinositol dimannoside (Ac3PIM2) to generate triacyl phosphatidylinositol trimannoside (Ac3PIM3). The polypeptide is GDP-mannose-dependent alpha-(1-6)-phosphatidylinositol dimannoside mannosyltransferase (pimC) (Mycobacterium tuberculosis (strain ATCC 25177 / H37Ra)).